Here is a 134-residue protein sequence, read N- to C-terminus: DKGPGFVVTGRVYCDPCRAGFETNVSHNVEGATVAVDCRPFDGGESKLKAEATTDKDGWYKIEIDQDHQEEICEVVLAKSPDKSCSEIEEFRDRARVPLTSNXGIKQQGIRYANPIAFFRKEPLKECGGILQAY.

Intrachain disulfides connect C14–C85, C17–C127, and C38–C73. The N-linked (GlcNAc...) asparagine glycan is linked to N24.

Belongs to the Ole e I family.

It localises to the secreted. In Lolium perenne (Perennial ryegrass), this protein is Major pollen allergen Lol p 11.